The primary structure comprises 634 residues: Chaperone protein HtpG (634 aa).

Residues 1-344 (MSETVSHNKE…SNDLPLNVSR (344 aa)) are a; substrate-binding. The segment at 345-561 (EILQDNKVTQ…DFEMGTQMAK (217 aa)) is b. The tract at residues 562–634 (LLEAAGQAVP…GAINKLLTKV (73 aa)) is c.

This sequence belongs to the heat shock protein 90 family. Homodimer.

The protein resides in the cytoplasm. Its function is as follows. Molecular chaperone. Has ATPase activity. This chain is Chaperone protein HtpG, found in Vibrio campbellii (strain ATCC BAA-1116).